The primary structure comprises 275 residues: tRNA pseudouridine synthase A (275 aa).

Asp56 acts as the Nucleophile in catalysis. Substrate is bound at residue Tyr110.

The protein belongs to the tRNA pseudouridine synthase TruA family.

The catalysed reaction is uridine(38/39/40) in tRNA = pseudouridine(38/39/40) in tRNA. In terms of biological role, formation of pseudouridine at positions 38, 39 and 40 in the anticodon stem and loop of transfer RNAs. The polypeptide is tRNA pseudouridine synthase A (Haloarcula marismortui (strain ATCC 43049 / DSM 3752 / JCM 8966 / VKM B-1809) (Halobacterium marismortui)).